Reading from the N-terminus, the 77-residue chain is MKEQKLIHEGLITESLPNGMFWVRLDNEDLVLGYVSGRIRRSFIRILPGDRVKIEVSRYDSTRGRIIYRLRNKDSND.

One can recognise an S1-like domain in the interval 1-71 (MKEQKLIHEG…TRGRIIYRLR (71 aa)).

The protein belongs to the IF-1 family. In terms of assembly, component of the 30S ribosomal translation pre-initiation complex which assembles on the 30S ribosome in the order IF-2 and IF-3, IF-1 and N-formylmethionyl-tRNA(fMet); mRNA recruitment can occur at any time during PIC assembly.

It is found in the plastid. The protein localises to the chloroplast. Its function is as follows. One of the essential components for the initiation of protein synthesis. Stabilizes the binding of IF-2 and IF-3 on the 30S subunit to which N-formylmethionyl-tRNA(fMet) subsequently binds. Helps modulate mRNA selection, yielding the 30S pre-initiation complex (PIC). Upon addition of the 50S ribosomal subunit IF-1, IF-2 and IF-3 are released leaving the mature 70S translation initiation complex. The chain is Translation initiation factor IF-1, chloroplastic from Cabomba caroliniana (Carolina fanwort).